Here is a 320-residue protein sequence, read N- to C-terminus: uncharacterized protein (320 aa).

To S.pombe SpAC23H3.12c.

This is an uncharacterized protein from Saccharomyces cerevisiae (strain ATCC 204508 / S288c) (Baker's yeast).